Here is a 664-residue protein sequence, read N- to C-terminus: Lysophospholipase 1 (664 aa).

Residues 1–22 (MKLQSLLVSAAVLTSLTENVNA) form the signal peptide. N-linked (GlcNAc...) asparagine glycosylation is found at N26, N33, N52, N78, N92, N123, N160, N170, N215, N277, N307, N345, N388, N459, N489, N513, N541, N565, and N582. The region spanning 35-586 (TCDDDINLVR…TNYCWNGTID (552 aa)) is the PLA2c domain. The GPI-anchor amidated asparagine moiety is linked to residue N634. The propeptide at 635–664 (AGNALVNYSNLNTNTFIGVLSVISAVFGLI) is removed in mature form.

Belongs to the lysophospholipase family.

It localises to the cell membrane. It catalyses the reaction a 1-acyl-sn-glycero-3-phosphocholine + H2O = sn-glycerol 3-phosphocholine + a fatty acid + H(+). It carries out the reaction a 1-acyl-sn-glycero-3-phospho-(1D-myo-inositol) + H2O = sn-glycero-3-phospho-1D-myo-inositol + a fatty acid + H(+). The catalysed reaction is a 1-acyl-sn-glycero-3-phospho-L-serine + H2O = sn-glycero-3-phospho-L-serine + a fatty acid + H(+). The enzyme catalyses a 1,2-diacyl-sn-glycero-3-phospho-(1D-myo-inositol) + 2 H2O = sn-glycero-3-phospho-1D-myo-inositol + 2 a carboxylate + 2 H(+). It catalyses the reaction a 1,2-diacyl-sn-glycero-3-phospho-L-serine + 2 H2O = sn-glycero-3-phospho-L-serine + 2 a carboxylate + 2 H(+). It carries out the reaction 2 1-hexadecanoyl-sn-glycero-3-phosphocholine = 1,2-dihexadecanoyl-sn-glycero-3-phosphocholine + sn-glycerol 3-phosphocholine. The catalysed reaction is 1-hexadecanoyl-sn-glycero-3-phosphocholine + H2O = sn-glycerol 3-phosphocholine + hexadecanoate + H(+). The enzyme catalyses 1,2-dihexadecanoyl-sn-glycero-3-phosphocholine + H2O = 1-hexadecanoyl-sn-glycero-3-phosphocholine + hexadecanoate + H(+). In terms of biological role, sequentially removes both fatty acyl groups from diacylglycerophospholipids and therefore has both phospholipase B and lysophospholipase activities. It also displays transacylase activity. Substrate preference is phosphatidylserine &gt; phosphatidylinositol &gt;&gt; phosphatidylcholine &gt; phosphatidylethanolamine. The substrate specificity is pH- and ion-dependent. In contrast with activities observed at optimum pH 3.5, the order of substrate preference at pH 5.5 is phosphatidylcholine = phosphatidylethanolamine &gt;&gt; phosphatidylinositol. Degrades predominantly phosphatidylcholine and to some extent phosphatidylinositol in vivo. The chain is Lysophospholipase 1 from Saccharomyces cerevisiae (strain ATCC 204508 / S288c) (Baker's yeast).